The primary structure comprises 154 residues: Crossover junction endodeoxyribonuclease RuvC (154 aa).

Catalysis depends on residues Asp7, Glu67, and Asp139. Mg(2+) contacts are provided by Asp7, Glu67, and Asp139.

It belongs to the RuvC family. In terms of assembly, homodimer which binds Holliday junction (HJ) DNA. The HJ becomes 2-fold symmetrical on binding to RuvC with unstacked arms; it has a different conformation from HJ DNA in complex with RuvA. In the full resolvosome a probable DNA-RuvA(4)-RuvB(12)-RuvC(2) complex forms which resolves the HJ. Mg(2+) serves as cofactor.

Its subcellular location is the cytoplasm. It catalyses the reaction Endonucleolytic cleavage at a junction such as a reciprocal single-stranded crossover between two homologous DNA duplexes (Holliday junction).. Its function is as follows. The RuvA-RuvB-RuvC complex processes Holliday junction (HJ) DNA during genetic recombination and DNA repair. Endonuclease that resolves HJ intermediates. Cleaves cruciform DNA by making single-stranded nicks across the HJ at symmetrical positions within the homologous arms, yielding a 5'-phosphate and a 3'-hydroxyl group; requires a central core of homology in the junction. The consensus cleavage sequence is 5'-(A/T)TT(C/G)-3'. Cleavage occurs on the 3'-side of the TT dinucleotide at the point of strand exchange. HJ branch migration catalyzed by RuvA-RuvB allows RuvC to scan DNA until it finds its consensus sequence, where it cleaves and resolves the cruciform DNA. This chain is Crossover junction endodeoxyribonuclease RuvC, found in Synechococcus sp. (strain CC9902).